The chain runs to 341 residues: Anthranilate phosphoribosyltransferase (341 aa).

5-phospho-alpha-D-ribose 1-diphosphate contacts are provided by residues Gly80, 83–84 (GD), Thr88, 90–93 (NIST), 108–116 (KHGNRSVSS), and Ser120. Residue Gly80 participates in anthranilate binding. Ser92 is a Mg(2+) binding site. Asn111 is a binding site for anthranilate. Arg166 lines the anthranilate pocket. Positions 225 and 226 each coordinate Mg(2+).

It belongs to the anthranilate phosphoribosyltransferase family. As to quaternary structure, homodimer. Requires Mg(2+) as cofactor.

It catalyses the reaction N-(5-phospho-beta-D-ribosyl)anthranilate + diphosphate = 5-phospho-alpha-D-ribose 1-diphosphate + anthranilate. Its pathway is amino-acid biosynthesis; L-tryptophan biosynthesis; L-tryptophan from chorismate: step 2/5. Functionally, catalyzes the transfer of the phosphoribosyl group of 5-phosphorylribose-1-pyrophosphate (PRPP) to anthranilate to yield N-(5'-phosphoribosyl)-anthranilate (PRA). This is Anthranilate phosphoribosyltransferase from Shouchella clausii (strain KSM-K16) (Alkalihalobacillus clausii).